Here is a 4456-residue protein sequence, read N- to C-terminus: Dynein axonemal heavy chain 2 (4456 aa).

Over residues 1–12 (MASKAEKKRKVA) the composition is skewed to basic residues. Residues 1–55 (MASKAEKKRKVAGRGGARAGRVVRAPQSTAGPGATEASLLPDGQEPEPESGKEDS) are disordered. Residues 1–1795 (MASKAEKKRK…RQTNTQFQYG (1795 aa)) form a stem region. Residues 1218–1274 (LDQIAQMRAMLMAMRDEENNLRSNLGIFKIEQPVSKDLQILEKELDALQQVWEITRD) are a coiled coil. The stretch at 1439–1474 (EDNQVALSTMKASRFVKAFEKDVDHWERCLSLILEV) is one TPR 1 repeat. 4 AAA regions span residues 1794–2015 (YGYE…LLRY), 2075–2302 (DTIE…DNCN), 2407–2654 (RYPP…VFQG), and 2751–3003 (EYNL…LRRY). ATP is bound by residues 1832–1839 (GPAGTGKT), 2113–2120 (GGTGSSKT), and 2445–2452 (GPVGTGKT). A TPR 2 repeat occupies 2750–2783 (NEYNLSPSVVPMQLVLFREAIEHITRIVRVIGQP). 2791–2798 (GIGGSGRQ) is a binding site for ATP. The tract at residues 3018 to 3301 (YKKLLGEKRQ…EELRKKSEEM (284 aa)) is stalk. A coiled-coil region spans residues 3041-3078 (FKIDETREKVEVMSLELEDAKKKVAEFQKQCEEYLVII). A TPR 3 repeat occupies 3101–3134 (IEEVKCQALADNAQKDLEEALPALEEAMRALESL). Coiled coils occupy residues 3245–3333 (KRIR…EEDL) and 3552–3596 (VRKE…GSLL). AAA stretches follow at residues 3387 to 3617 (LTNP…EVTE) and 3833 to 4052 (VTSF…LLSL). TPR repeat units follow at residues 4101–4134 (TTPF…LPSM) and 4135–4169 (DPPE…QPQI).

This sequence belongs to the dynein heavy chain family. Part of the axonemal inner dynein arm complex that consists of at least two heavy chains and a number of intermediate and light chains. Interacts with DNAI4.

It localises to the cytoplasm. It is found in the cytoskeleton. The protein localises to the cilium axoneme. The protein resides in the flagellum axoneme. Functionally, as part of the axonemal inner dynein arm complex plays a central role in ciliary beat. Expressed in sperm flagellum, it is required for sperm motility. Dyneins are microtubule-based molecular motors possessing ATPase activities that can convert the chemical energy of ATP into relative sliding between adjacent microtubule doublets to generate ciliary bending. The protein is Dynein axonemal heavy chain 2 of Mus musculus (Mouse).